Consider the following 302-residue polypeptide: Sulfate adenylyltransferase subunit 2 (302 aa).

The protein belongs to the PAPS reductase family. CysD subfamily. Heterodimer composed of CysD, the smaller subunit, and CysN.

It carries out the reaction sulfate + ATP + H(+) = adenosine 5'-phosphosulfate + diphosphate. Its pathway is sulfur metabolism; hydrogen sulfide biosynthesis; sulfite from sulfate: step 1/3. Its function is as follows. With CysN forms the ATP sulfurylase (ATPS) that catalyzes the adenylation of sulfate producing adenosine 5'-phosphosulfate (APS) and diphosphate, the first enzymatic step in sulfur assimilation pathway. APS synthesis involves the formation of a high-energy phosphoric-sulfuric acid anhydride bond driven by GTP hydrolysis by CysN coupled to ATP hydrolysis by CysD. The polypeptide is Sulfate adenylyltransferase subunit 2 (Parabacteroides distasonis (strain ATCC 8503 / DSM 20701 / CIP 104284 / JCM 5825 / NCTC 11152)).